A 150-amino-acid polypeptide reads, in one-letter code: Ventricular natriuretic peptide (150 aa).

Positions 1-21 (MAKSGIYLGCFILILIQNMVA) are cleaved as a signal peptide. A disordered region spans residues 52–75 (EEPEVYPESEDMKMDAEEEDAGIS). Cys120 and Cys136 are joined by a disulfide.

It belongs to the natriuretic peptide family. Heart ventricle, and to a lower extent in heart atrium.

The protein localises to the secreted. Exhibits natriuretic and vasodepressor activity. The polypeptide is Ventricular natriuretic peptide (vnp) (Anguilla japonica (Japanese eel)).